The following is a 462-amino-acid chain: tRNA modification GTPase MnmE (462 aa).

Residues arginine 27, glutamate 89, and arginine 128 each coordinate (6S)-5-formyl-5,6,7,8-tetrahydrofolate. In terms of domain architecture, TrmE-type G spans 223-383 (GLKIAIVGRP…LEAAILAAVG (161 aa)). Asparagine 233 serves as a coordination point for K(+). GTP contacts are provided by residues 233-238 (NVGKSS), 252-258 (TDLPGTT), and 277-280 (DTAG). Serine 237 contacts Mg(2+). 3 residues coordinate K(+): threonine 252, leucine 254, and threonine 257. A Mg(2+)-binding site is contributed by threonine 258. Lysine 462 contributes to the (6S)-5-formyl-5,6,7,8-tetrahydrofolate binding site.

Belongs to the TRAFAC class TrmE-Era-EngA-EngB-Septin-like GTPase superfamily. TrmE GTPase family. As to quaternary structure, homodimer. Heterotetramer of two MnmE and two MnmG subunits. K(+) is required as a cofactor.

The protein localises to the cytoplasm. Exhibits a very high intrinsic GTPase hydrolysis rate. Involved in the addition of a carboxymethylaminomethyl (cmnm) group at the wobble position (U34) of certain tRNAs, forming tRNA-cmnm(5)s(2)U34. This chain is tRNA modification GTPase MnmE, found in Synechococcus elongatus (strain ATCC 33912 / PCC 7942 / FACHB-805) (Anacystis nidulans R2).